The primary structure comprises 180 residues: Chromosome-anchoring protein RacA (180 aa).

The H-T-H motif DNA-binding region spans 5-25 (TPFIAKKLGVSPKAVVRIAQQ). Residues 89–151 (SHDFEQLTAQ…LEATLKKEEP (63 aa)) are a coiled coil.

This sequence belongs to the RacA family.

It is found in the cytoplasm. Functionally, required for the formation of axial filaments and for anchoring the origin regions at the cell poles in sporulating cells, thus ensuring proper chromosome segregation in the prespore. Binds in a dispersed manner throughout the chromosome but preferentially to sites clustered in the origin portion of the chromosome, causing condensation of the chromosome and its remodeling into an elongated, anchored structure. The polypeptide is Chromosome-anchoring protein RacA (Bacillus cereus (strain ATCC 10987 / NRS 248)).